The sequence spans 118 residues: Ribosome-binding factor A (118 aa).

The protein belongs to the RbfA family. In terms of assembly, monomer. Binds 30S ribosomal subunits, but not 50S ribosomal subunits or 70S ribosomes.

It is found in the cytoplasm. In terms of biological role, one of several proteins that assist in the late maturation steps of the functional core of the 30S ribosomal subunit. Associates with free 30S ribosomal subunits (but not with 30S subunits that are part of 70S ribosomes or polysomes). Required for efficient processing of 16S rRNA. May interact with the 5'-terminal helix region of 16S rRNA. This chain is Ribosome-binding factor A, found in Latilactobacillus sakei subsp. sakei (strain 23K) (Lactobacillus sakei subsp. sakei).